Here is a 6713-residue protein sequence, read N- to C-terminus: Extracellular matrix-binding protein EbhA (6713 aa).

FIVAR domains are found at residues 1-58 (MGNL…VEQA), 126-184 (AMGQ…VTAA), 252-310 (AMKG…ITQA), 378-436 (QMGN…VEAA), 504-562 (AMAN…VENA), 630-688 (AMGT…INQI), 756-814 (AMGQ…VDRA), 882-940 (AMNS…VDNA), 1008-1066 (AMGA…INDM), 1134-1192 (AMTA…VNSA), 1260-1318 (AMKG…ITQA), 1386-1444 (AMHS…VEQA), 1512-1570 (AMGQ…VERA), 1638-1696 (AMTA…VTNA), 1764-1822 (AMKG…INQA), 1890-1948 (AMTN…VETA), 2142-2200 (AMNQ…INQK), 2268-2325 (AMGN…VQAA), 2393-2451 (AMGQ…VEAA), 2519-2577 (AMQR…VEQA), 2645-2703 (AMDQ…VTAA), 2771-2829 (AMNQ…VTQA), 2897-2955 (AMER…VEAA), 3023-3081 (AMGN…VEAA), 3149-3207 (AMDK…INQA), 3275-3333 (AMGN…VEQA), 3401-3459 (AMTQ…ITAA), 3527-3585 (AMTQ…IQQA), 3653-3711 (AMTN…VEQA), 3779-3837 (AMTQ…VAQA), 3905-3963 (AMGT…VTKA), 4031-4089 (AMGN…ITRA), 4157-4218 (AMDQ…ITNE), 4283-4341 (AMEL…VNGA), 4409-4467 (AMGN…VEQA), 4535-4592 (AMHG…INQV), 4660-4718 (LMDA…VSSA), 4786-4844 (AMKA…IDQA), 4912-4970 (AMEA…VEQL), 5038-5096 (AMQA…VEQL), 5164-5222 (AMET…VEQA), 5290-5344 (SMDQ…VDQA), 5412-5471 (AMDQ…VIKL), and 5666-5722 (AMET…INGA). A helical membrane pass occupies residues 6518-6540 (VIKNAIGVVGISGLLASFWFFIA). The tract at residues 6616 to 6713 (RRKEDEEDVE…KKKKSKKNKK (98 aa)) is disordered. 2 stretches are compositionally biased toward basic and acidic residues: residues 6631–6641 (TDEKVLKDNEH) and 6680–6690 (QKDNQSKDKKS). Positions 6695-6713 (TSKKVAAKKKKKKSKKNKK) are enriched in basic residues.

The protein localises to the cell membrane. This is Extracellular matrix-binding protein EbhA (ebhA) from Staphylococcus aureus (strain Mu3 / ATCC 700698).